The chain runs to 196 residues: Probable malonic semialdehyde reductase RutE (196 aa).

The protein belongs to the nitroreductase family. HadB/RutE subfamily. FMN is required as a cofactor.

The enzyme catalyses 3-hydroxypropanoate + NADP(+) = 3-oxopropanoate + NADPH + H(+). May reduce toxic product malonic semialdehyde to 3-hydroxypropionic acid, which is excreted. The sequence is that of Probable malonic semialdehyde reductase RutE from Shigella flexneri serotype 5b (strain 8401).